Consider the following 404-residue polypeptide: 4-hydroxyphenylpyruvate dioxygenase (404 aa).

VOC domains follow at residues 28 to 163 (GYDH…FIQR) and 194 to 353 (YVDH…IFTK). Residues His197, His280, and Glu364 each coordinate Fe cation.

It belongs to the 4HPPD family. The cofactor is Fe cation.

It carries out the reaction 3-(4-hydroxyphenyl)pyruvate + O2 = homogentisate + CO2. Its pathway is amino-acid degradation; L-phenylalanine degradation; acetoacetate and fumarate from L-phenylalanine: step 3/6. Its function is as follows. Key enzyme in the degradation of tyrosine. The polypeptide is 4-hydroxyphenylpyruvate dioxygenase (TFA) (Tetrahymena thermophila).